A 295-amino-acid chain; its full sequence is 33 kDa chaperonin (295 aa).

2 disulfide bridges follow: Cys-237-Cys-239 and Cys-270-Cys-273.

It belongs to the HSP33 family. In terms of processing, under oxidizing conditions two disulfide bonds are formed involving the reactive cysteines. Under reducing conditions zinc is bound to the reactive cysteines and the protein is inactive.

It is found in the cytoplasm. In terms of biological role, redox regulated molecular chaperone. Protects both thermally unfolding and oxidatively damaged proteins from irreversible aggregation. Plays an important role in the bacterial defense system toward oxidative stress. This Symbiobacterium thermophilum (strain DSM 24528 / JCM 14929 / IAM 14863 / T) protein is 33 kDa chaperonin.